The sequence spans 408 residues: MIPGNRMLMVVLLCQVLLGGATDASLIPETGKKKVAEIQGHAGGRRSGQSHELLRDFEATLLQMFGLRRRPQPSKSAVIPDYMRDLYRLQSGEEEEEEQSQGTGLEYPERPASRANTVRSFHHEEHLENIPGTSESSAFRFFFNLSSIPENEVISSAELRLFREQVDQGPDWEQGFHRINIYEVMKPPAEMVPGHLITRLLDTRLVRHNVTRWETFDVSPAVLRWTREKQPNYGLAIEVTHLHQTRTHQGQHVRISRSLPQGSGNWAQLRPLLVTFGHDGRGHTLTRRRAKRSPKHHPQRSRKKNKNCRRHSLYVDFSDVGWNDWIVAPPGYQAFYCHGDCPFPLADHLNSTNHAIVQTLVNSVNSSIPKACCVPTELSAISMLYLDEYDKVVLKNYQEMVVEGCGCR.

Residues 1-19 (MIPGNRMLMVVLLCQVLLG) form the signal peptide. Positions 20-292 (GATDASLIPE…HTLTRRRAKR (273 aa)) are excised as a propeptide. Phosphoserine is present on Ser91. Positions 91-113 (SGEEEEEEQSQGTGLEYPERPAS) are disordered. 2 N-linked (GlcNAc...) asparagine glycosylation sites follow: Asn144 and Asn209. A disordered region spans residues 281–307 (RGHTLTRRRAKRSPKHHPQRSRKKNKN). A compositionally biased stretch (basic residues) spans 284 to 307 (TLTRRRAKRSPKHHPQRSRKKNKN). 3 cysteine pairs are disulfide-bonded: Cys308-Cys373, Cys337-Cys405, and Cys341-Cys407. N-linked (GlcNAc...) asparagine glycosylation is found at Asn350 and Asn365.

It belongs to the TGF-beta family. Homodimer; disulfide-linked. Interacts with GREM2. Part of a complex consisting of TWSG1 and CHRD. Interacts with the serine proteases, HTRA1 and HTRA3; the interaction with either inhibits BMP4-mediated signaling. The HTRA protease activity is required for this inhibition. Interacts with SOSTDC1. Interacts with FBN1 (via N-terminal domain) and FBN2. Interacts with type I receptor BMPR1A. Interacts with type II receptor BMPR2. Interacts with FSTL1; this interaction inhibits the activation of the BMP4/Smad1/5/8 signaling pathway. Interacts with SCUBE3. Interacts with TGFBR3.

The protein resides in the secreted. It is found in the extracellular space. The protein localises to the extracellular matrix. In terms of biological role, growth factor of the TGF-beta superfamily that plays essential roles in many developmental processes, including neurogenesis, vascular development, angiogenesis and osteogenesis. Acts in concert with PTHLH/PTHRP to stimulate ductal outgrowth during embryonic mammary development and to inhibit hair follicle induction. Initiates the canonical BMP signaling cascade by associating with type I receptor BMPR1A and type II receptor BMPR2. Once all three components are bound together in a complex at the cell surface, BMPR2 phosphorylates and activates BMPR1A. In turn, BMPR1A propagates signal by phosphorylating SMAD1/5/8 that travel to the nucleus and act as activators and repressors of transcription of target genes. Positively regulates the expression of odontogenic development regulator MSX1 via inducing the IPO7-mediated import of SMAD1 to the nucleus. Required for MSX1-mediated mesenchymal molar tooth bud development beyond the bud stage, via promoting Wnt signaling. Acts as a positive regulator of odontoblast differentiation during mesenchymal tooth germ formation, expression is repressed during the bell stage by MSX1-mediated inhibition of CTNNB1 signaling. Able to induce its own expression in dental mesenchymal cells and also in the neighboring dental epithelial cells via an MSX1-mediated pathway. Can also signal through non-canonical BMP pathways such as ERK/MAP kinase, PI3K/Akt, or SRC cascades. For example, induces SRC phosphorylation which, in turn, activates VEGFR2, leading to an angiogenic response. The protein is Bone morphogenetic protein 4 of Rattus norvegicus (Rat).